A 258-amino-acid polypeptide reads, in one-letter code: Ribosomal RNA small subunit methyltransferase J (258 aa).

Residues 107-108 (RD), 123-124 (ER), 159-160 (SS), and Asp177 contribute to the S-adenosyl-L-methionine site.

It belongs to the methyltransferase superfamily. RsmJ family.

Its subcellular location is the cytoplasm. It carries out the reaction guanosine(1516) in 16S rRNA + S-adenosyl-L-methionine = N(2)-methylguanosine(1516) in 16S rRNA + S-adenosyl-L-homocysteine + H(+). Functionally, specifically methylates the guanosine in position 1516 of 16S rRNA. The protein is Ribosomal RNA small subunit methyltransferase J of Shewanella sediminis (strain HAW-EB3).